The chain runs to 223 residues: Glutathione S-transferase alpha I (223 aa).

M1 is modified (N-acetylmethionine). An N-acetylalanine; in Glutathione S-transferase alpha I, N-terminally processed modification is found at A2. The 81-residue stretch at 3 to 83 (RKPLLHYFNG…YVANKHNLYG (81 aa)) folds into the GST N-terminal domain. At K4 the chain carries N6-succinyllysine. Glutathione-binding positions include Y9, R45, 54 to 55 (QV), and 67 to 68 (QT). Residues 85–208 (DMKERALIDM…QPGSQRKPPM (124 aa)) enclose the GST C-terminal domain.

It belongs to the GST superfamily. Alpha family. As to quaternary structure, homodimer or heterodimer of GSTA1 and GSTA2. As to expression, liver and lung.

Its subcellular location is the cytoplasm. The enzyme catalyses RX + glutathione = an S-substituted glutathione + a halide anion + H(+). It catalyses the reaction prostaglandin A2 + glutathione = prostaglandin A2-S-(R)-glutathione. It carries out the reaction prostaglandin J2 + glutathione = prostaglandin J2-S-(R)-glutathione. The catalysed reaction is (13S)-hydroperoxy-(9Z,11E)-octadecadienoate + 2 glutathione = (13S)-hydroxy-(9Z,11E)-octadecadienoate + glutathione disulfide + H2O. The enzyme catalyses androst-5-ene-3,17-dione = androst-4-ene-3,17-dione. Glutathione S-transferase that catalyzes the nucleophilic attack of the sulfur atom of glutathione on the electrophilic groups of a wide range of exogenous and endogenous compounds. Involved in the formation of glutathione conjugates of both prostaglandin A2 (PGA2) and prostaglandin J2 (PGJ2). It also catalyzes the isomerization of D5-androstene-3,17-dione (AD) into D4-androstene-3,17-dione and may therefore play an important role in hormone biosynthesis. Through its glutathione-dependent peroxidase activity toward the fatty acid hydroperoxide (13S)-hydroperoxy-(9Z,11E)-octadecadienoate/13-HPODE it is also involved in the metabolism of oxidized linoleic acid. This is Glutathione S-transferase alpha I from Oryctolagus cuniculus (Rabbit).